We begin with the raw amino-acid sequence, 380 residues long: UDP-N-acetylglucosamine 2-epimerase (380 aa).

It belongs to the UDP-N-acetylglucosamine 2-epimerase family.

The protein resides in the cytoplasm. The enzyme catalyses UDP-N-acetyl-alpha-D-glucosamine = UDP-N-acetyl-alpha-D-mannosamine. The protein operates within cell wall biogenesis; poly(glycerol phosphate) teichoic acid biosynthesis. Catalyzes the conversion of UDP-N-acetylglucosamine into UDP-N-acetylmannosamine, a precursor of the teichoic acid linkage unit. The protein is UDP-N-acetylglucosamine 2-epimerase (mnaA) of Bacillus subtilis (strain 168).